Here is a 597-residue protein sequence, read N- to C-terminus: MTAQIRLAEPADLNDDTLRARAVAAARGDQRFDVLITGGTLVDVVTGELRPADIGIVGALIASVHEPASRRDAAQVIDAGGAYVSPGLIDTHMHIESSMITPAAYAAAVVARGVTTIVWDPHEFGNVHGVDGVRWAAKAIENLPLRAILLAPSCVPSAPGLERGGADFDAAILADLLSWPEIGGIAEIMNMRGVIERDPRMSGIVQAGLAAEKLVCGHARGLKNADLNAFMAAGVSSDHELVSGEDLMAKLRAGLTIELRGSHDHLLPEFVAALNTLGHLPQTVTLCTDDVFPDDLLQGGGLDDVVRRLVRYGLKPEWALRAATLNAAQRLGRSDLGLIAAGRRADIVVFEDLNGFSARHVLASGRAVAEGGRMLVDIPTCDTTVLKGSMKLPLRMANDFLVKSQGAKVRLATIDRPRFTQWGETEADVKDGFVVPPEGATMISVTHRHGMAEPTTKTGFLTGWGRWNGAFATTVSHDSHNLTVFGGNAGDMALAANAVIGTGGGMAVASEGKVTAILPLPLSGLVSDAPLEEVARAFEDLREAVGKVVEWQPPYLVFKACFGATLACNIGPHQTDMGIADVLTGKVMESPVIEVLG.

It belongs to the metallo-dependent hydrolases superfamily. Adenine deaminase family. The cofactor is Mn(2+).

The enzyme catalyses adenine + H2O + H(+) = hypoxanthine + NH4(+). This is Adenine deaminase 2 from Agrobacterium fabrum (strain C58 / ATCC 33970) (Agrobacterium tumefaciens (strain C58)).